The primary structure comprises 341 residues: uncharacterized protein (341 aa).

58-82 (ITGGSSGIGAAAAKKIAEAGGTVVL) is an NADP(+) binding site. Residue Ser194 coordinates substrate. Tyr207 acts as the Proton acceptor in catalysis. The disordered stretch occupies residues 309–329 (DSSAAKGSESQTDTSELDKRS).

This sequence belongs to the short-chain dehydrogenases/reductases (SDR) family.

This is an uncharacterized protein from Mycobacterium bovis (strain ATCC BAA-935 / AF2122/97).